We begin with the raw amino-acid sequence, 940 residues long: AP-2 complex subunit alpha (940 aa).

Residues Ser632 and Ser634 each carry the phosphoserine modification. Polar residues predominate over residues 651–662 (SHSKLNNSNANT). Residues 651 to 679 (SHSKLNNSNANTDLLGLSTPPSNNIGSGS) are disordered. A compositionally biased stretch (low complexity) spans 668-679 (STPPSNNIGSGS).

Belongs to the adaptor complexes large subunit family. In terms of assembly, adaptor protein complex 2 (AP-2) is a heterotetramer composed of two large adaptins (alpha-type and beta-type subunits), a medium adaptin (mu-type subunit AP50) and a small adaptin (sigma-type subunit AP17). In terms of tissue distribution, expressed in the Garland cells, imaginal disks, adult midgut precursors, the antenno-maxillary complex, the endoderm, the fat bodies, and the visceral mesoderm and cells of the CNS and PNS including neuroblasts, the presumptive stomatogastric nervous system, and the lateral chordotonal sense organs.

The protein resides in the cell membrane. It localises to the membrane. It is found in the coated pit. Functionally, adaptins are components of the adapter complexes which link clathrin to receptors in coated vesicles. Clathrin-associated protein complexes are believed to interact with the cytoplasmic tails of membrane proteins, leading to their selection and concentration. AP-2alpha is a subunit of the plasma membrane adapter. The protein is AP-2 complex subunit alpha (AP-2alpha) of Drosophila melanogaster (Fruit fly).